The sequence spans 287 residues: ATP synthase gamma chain (287 aa).

This sequence belongs to the ATPase gamma chain family. In terms of assembly, F-type ATPases have 2 components, CF(1) - the catalytic core - and CF(0) - the membrane proton channel. CF(1) has five subunits: alpha(3), beta(3), gamma(1), delta(1), epsilon(1). CF(0) has three main subunits: a, b and c. The F(1)F(0) complex interacts with SpoIIIJ and YqjG; YqgA is found in the same complex. Interacts with FloT.

The protein resides in the cell membrane. Its subcellular location is the membrane raft. Functionally, produces ATP from ADP in the presence of a proton gradient across the membrane. The gamma chain is believed to be important in regulating ATPase activity and the flow of protons through the CF(0) complex. This is ATP synthase gamma chain from Bacillus subtilis (strain 168).